Reading from the N-terminus, the 65-residue chain is uncharacterized protein (65 aa).

This is an uncharacterized protein from Vaccinia virus (strain Copenhagen) (VACV).